Reading from the N-terminus, the 201-residue chain is Glutathione peroxidase 1 (201 aa).

S32 bears the Phosphoserine mark. U47 is an active-site residue. Residue U47 is a non-standard amino acid, selenocysteine. N6-acetyllysine; alternate is present on residues K86 and K112. N6-succinyllysine; alternate occurs at positions 86 and 112. The residue at position 119 (K119) is an N6-acetyllysine. K146 bears the N6-acetyllysine; alternate mark. At K146 the chain carries N6-succinyllysine; alternate. Phosphoserine is present on residues S195 and S199.

The protein belongs to the glutathione peroxidase family. As to quaternary structure, homotetramer. Interacts with MIEN1. During periods of oxidative stress, Sec-47 may react with a superoxide radical, irreversibly lose hydroselenide and be converted to dehydroalanine. As to expression, expressed in liver and lung.

The protein localises to the cytoplasm. The protein resides in the mitochondrion. It carries out the reaction 2 glutathione + H2O2 = glutathione disulfide + 2 H2O. The enzyme catalyses a hydroperoxy polyunsaturated fatty acid + 2 glutathione = a hydroxy polyunsaturated fatty acid + glutathione disulfide + H2O. The catalysed reaction is tert-butyl hydroperoxide + 2 glutathione = tert-butanol + glutathione disulfide + H2O. It catalyses the reaction cumene hydroperoxide + 2 glutathione = 2-phenylpropan-2-ol + glutathione disulfide + H2O. It carries out the reaction (13S)-hydroperoxy-(9Z,11E)-octadecadienoate + 2 glutathione = (13S)-hydroxy-(9Z,11E)-octadecadienoate + glutathione disulfide + H2O. The enzyme catalyses (9S)-hydroperoxy-(10E,12Z)-octadecadienoate + 2 glutathione = (9S)-hydroxy-(10E,12Z)-octadecadienoate + glutathione disulfide + H2O. The catalysed reaction is (5S)-hydroperoxy-(6E,8Z,11Z,14Z)-eicosatetraenoate + 2 glutathione = (5S)-hydroxy-(6E,8Z,11Z,14Z)-eicosatetraenoate + glutathione disulfide + H2O. It catalyses the reaction (12S)-hydroperoxy-(5Z,8Z,10E,14Z)-eicosatetraenoate + 2 glutathione = (12S)-hydroxy-(5Z,8Z,10E,14Z)-eicosatetraenoate + glutathione disulfide + H2O. It carries out the reaction (12R)-hydroperoxy-(5Z,8Z,10E,14Z)-eicosatetraenoate + 2 glutathione = (12R)-hydroxy-(5Z,8Z,10E,14Z)-eicosatetraenoate + glutathione disulfide + H2O. The enzyme catalyses (15S)-hydroperoxy-(5Z,8Z,11Z,13E)-eicosatetraenoate + 2 glutathione = (15S)-hydroxy-(5Z,8Z,11Z,13E)-eicosatetraenoate + glutathione disulfide + H2O. The catalysed reaction is (5S)-hydroperoxy-(6E,8Z,11Z,14Z,17Z)-eicosapentaenoate + 2 glutathione = (5S)-hydroxy-(6E,8Z,11Z,14Z,17Z)-eicosapentaenoate + glutathione disulfide + H2O. It catalyses the reaction (12S)-hydroperoxy-(5Z,8Z,10E,14Z,17Z)-eicosapentaenoate + 2 glutathione = (12S)-hydroxy-(5Z,8Z,10E,14Z,17Z)-eicosapentaenoate + glutathione disulfide + H2O. It carries out the reaction (15S)-hydroperoxy-(5Z,8Z,11Z,13E,17Z)-eicosapentaenoate + 2 glutathione = (15S)-hydroxy-(5Z,8Z,11Z,13E,17Z)-eicosapentaenoate + glutathione disulfide + H2O. The enzyme catalyses (15S)-hydroperoxy-(11Z,13E)-eicosadienoate + 2 glutathione = (15S)-hydroxy-(11Z,13E)-eicosadienoate + glutathione disulfide + H2O. The catalysed reaction is (17S)-hydroperoxy-(4Z,7Z,10Z,13Z,15E,19Z)-docosahexaenoate + 2 glutathione = (17S)-hydroxy-(4Z,7Z,10Z,13Z,15E,19Z)-docosahexaenoate + glutathione disulfide + H2O. Catalyzes the reduction of hydroperoxides in a glutathione-dependent manner thus regulating cellular redox homeostasis. Can reduce small soluble hydroperoxides such as H2O2, cumene hydroperoxide and tert-butyl hydroperoxide, as well as several fatty acid-derived hydroperoxides. In platelets catalyzes the reduction of 12-hydroperoxyeicosatetraenoic acid, the primary product of the arachidonate 12-lipoxygenase pathway. This chain is Glutathione peroxidase 1, found in Rattus norvegicus (Rat).